Consider the following 1034-residue polypeptide: DNA polymerase I B, chloroplastic/mitochondrial (1034 aa).

Residues 1–55 (MGVSLRHLSPSSFWVSRRPRVSSSILSFLVPRRRILCTRKVAIIKGNAGYSTATD) constitute a chloroplast and mitochondrion transit peptide. A 3'-5' exonuclease domain is found at 270–468 (ACDTEVSRID…LYESMKKQLQ (199 aa)). The segment at 700-1030 (HAIAALCEVC…SVDAKCAQNW (331 aa)) is polymerase.

The protein belongs to the DNA polymerase type-A family. Expressed in shoot apical meristem.

It localises to the mitochondrion. The protein localises to the plastid. It is found in the chloroplast. The enzyme catalyses DNA(n) + a 2'-deoxyribonucleoside 5'-triphosphate = DNA(n+1) + diphosphate. Not inhibited by aphidicolin. In terms of biological role, in addition to polymerase activity, this DNA polymerase exhibits 5'-3' exonuclease activity. Required for DNA replication and accumulation in plastids and mitochondria. This chain is DNA polymerase I B, chloroplastic/mitochondrial (POLIB), found in Arabidopsis thaliana (Mouse-ear cress).